A 113-amino-acid polypeptide reads, in one-letter code: Protein INCREASED RESISTANCE TO MYZUS PERSICAE 1 (113 aa).

The FLZ-type zinc-finger motif lies at 56–100; that stretch reads DFLKTCSLCNRSLCHHRDIYMYRGNNAFCSLECREKQIKLDEKKA.

It belongs to the FLZ family. Interacts with KIN10 and KIN11 via its FLZ-type zinc finger domain. Interacts with KINB3 via its N-terminal part. Interacts with GEBP.

The protein localises to the nucleus. It localises to the cytoplasm. Its function is as follows. May act as an adapter to facilitate the interaction of SnRK1 complex with effector proteins, conferring tissue- and stimulus-type specific differences in the SnRK1 regulation pathway. This chain is Protein INCREASED RESISTANCE TO MYZUS PERSICAE 1, found in Arabidopsis thaliana (Mouse-ear cress).